A 429-amino-acid chain; its full sequence is Probable exoglucanase GH6D (429 aa).

The signal sequence occupies residues 1 to 17; that stretch reads MRAVYAILAGLLATGSA. Substrate-binding residues include Trp75 and Ser77. Residues Asp115 and Asp162 each act as proton donor in the active site. Residues Asn206 and Trp209 each contribute to the substrate site. N-linked (GlcNAc...) asparagine glycosylation is present at Asn237. The substrate site is built by Asn240, Trp300, Lys328, and Glu332. The disordered stretch occupies residues 240–261; the sequence is NYNPYSTNNPPPYTAGSPSADE. Residues 362–390 are disordered; the sequence is PEIRADGGGGGSPAPGPSSTAVAPSPSAT. Over residues 378–390 the composition is skewed to low complexity; the sequence is PSSTAVAPSPSAT. In terms of domain architecture, CBM1 spans 394–429; that stretch reads NCAARWAQCGGQGWTGPTCCAQGTCQASNQWYSQCL.

The protein belongs to the glycosyl hydrolase 6 (cellulase B) family.

Its subcellular location is the secreted. Its function is as follows. Probable exoglucanase that may play an important function in biomass degradation by catalyzing the hydrolysis of cellulose. In Podospora anserina (strain S / ATCC MYA-4624 / DSM 980 / FGSC 10383) (Pleurage anserina), this protein is Probable exoglucanase GH6D.